Consider the following 152-residue polypeptide: Nucleoside diphosphate kinase (152 aa).

ATP-binding residues include lysine 11, phenylalanine 59, arginine 87, threonine 93, arginine 104, and asparagine 114. The active-site Pros-phosphohistidine intermediate is the histidine 117.

The protein belongs to the NDK family. Homotetramer. Mg(2+) is required as a cofactor.

Its subcellular location is the cytoplasm. It carries out the reaction a 2'-deoxyribonucleoside 5'-diphosphate + ATP = a 2'-deoxyribonucleoside 5'-triphosphate + ADP. It catalyses the reaction a ribonucleoside 5'-diphosphate + ATP = a ribonucleoside 5'-triphosphate + ADP. Functionally, major role in the synthesis of nucleoside triphosphates other than ATP. The ATP gamma phosphate is transferred to the NDP beta phosphate via a ping-pong mechanism, using a phosphorylated active-site intermediate. The sequence is that of Nucleoside diphosphate kinase from Prochlorococcus marinus (strain MIT 9515).